Here is a 185-residue protein sequence, read N- to C-terminus: dCTP deaminase (185 aa).

DCTP-binding positions include 108-113 (KSTYAR), 132-134 (TLE), Q153, Y167, and Q177. The active-site Proton donor/acceptor is E134.

This sequence belongs to the dCTP deaminase family. Homotrimer.

The enzyme catalyses dCTP + H2O + H(+) = dUTP + NH4(+). Its pathway is pyrimidine metabolism; dUMP biosynthesis; dUMP from dCTP (dUTP route): step 1/2. Functionally, catalyzes the deamination of dCTP to dUTP. This chain is dCTP deaminase, found in Pelagibacter ubique (strain HTCC1062).